The following is a 215-amino-acid chain: tRNA (guanine-N(7)-)-methyltransferase (215 aa).

S-adenosyl-L-methionine-binding residues include Glu43, Glu68, Asp95, and Asp117. Residue Asp117 is part of the active site. Substrate-binding positions include Lys121, Asp153, and 190–193; that span reads TEYE.

It belongs to the class I-like SAM-binding methyltransferase superfamily. TrmB family.

It catalyses the reaction guanosine(46) in tRNA + S-adenosyl-L-methionine = N(7)-methylguanosine(46) in tRNA + S-adenosyl-L-homocysteine. It participates in tRNA modification; N(7)-methylguanine-tRNA biosynthesis. Its function is as follows. Catalyzes the formation of N(7)-methylguanine at position 46 (m7G46) in tRNA. The chain is tRNA (guanine-N(7)-)-methyltransferase from Staphylococcus epidermidis (strain ATCC 35984 / DSM 28319 / BCRC 17069 / CCUG 31568 / BM 3577 / RP62A).